The primary structure comprises 242 residues: Large ribosomal subunit protein uL1 (242 aa).

It belongs to the universal ribosomal protein uL1 family. Part of the 50S ribosomal subunit.

Functionally, binds directly to 23S rRNA. The L1 stalk is quite mobile in the ribosome, and is involved in E site tRNA release. Its function is as follows. Protein L1 is also a translational repressor protein, it controls the translation of the L11 operon by binding to its mRNA. The polypeptide is Large ribosomal subunit protein uL1 (Dictyoglomus thermophilum (strain ATCC 35947 / DSM 3960 / H-6-12)).